The following is a 348-amino-acid chain: Secreted frizzled-related protein 4 (348 aa).

An N-terminal signal peptide occupies residues 1–18; that stretch reads MLLSILVALCLCVRLALG. An FZ domain is found at 19-139; the sequence is VRGAPCEAVR…VYDRGVCISP (121 aa). Disulfide bonds link C24/C85, C32/C78, C69/C108, C97/C136, and C101/C125. 2 N-linked (GlcNAc...) asparagine glycosylation sites follow: N38 and N68. N116, N194, and N240 each carry an N-linked (GlcNAc...) asparagine glycan. Positions 178–296 constitute an NTR domain; it reads CKCKKVKPTL…WEERLQEQQR (119 aa). The span at 289 to 303 shows a compositional bias: basic and acidic residues; sequence ERLQEQQRTTQDKKQ. Residues 289 to 348 are disordered; that stretch reads ERLQEQQRTTQDKKQIASRTSRSNPPKPKGRSPASKPASPKKNIKARSAPKKSNPKKSTS. Over residues 330 to 348 the composition is skewed to basic residues; sequence KNIKARSAPKKSNPKKSTS.

The protein belongs to the secreted frizzled-related protein (sFRP) family. As to expression, expressed in the involuting mammary gland, ovarian corpus luteum and prostate. In ovaries, low levels found in granulosa cells. High levels in corpora lutea of pregnant animals.

It is found in the secreted. Its function is as follows. Soluble frizzled-related proteins (sFRPS) function as modulators of Wnt signaling through direct interaction with Wnts. They have a role in regulating cell growth and differentiation in specific cell types. SFRP4 plays a role in bone morphogenesis. May also act as a regulator of adult uterine morphology and function. May also increase apoptosis during ovulation possibly through modulation of FZ1/FZ4/WNT4 signaling. Has phosphaturic effects by specifically inhibiting sodium-dependent phosphate uptake. In Rattus norvegicus (Rat), this protein is Secreted frizzled-related protein 4 (Sfrp4).